The primary structure comprises 595 residues: ATP-dependent lipid A-core flippase (595 aa).

Positions methionine 1–valine 20 are disordered. A compositionally biased stretch (low complexity) spans serine 9–alanine 19. A run of 4 helical transmembrane segments spans residues tryptophan 41–isoleucine 61, glycine 81–glycine 101, valine 169–valine 189, and isoleucine 266–alanine 286. The 282-residue stretch at leucine 45–arginine 326 folds into the ABC transmembrane type-1 domain. The region spanning isoleucine 357 to arginine 592 is the ABC transporter domain. Glycine 390 to serine 397 is an ATP binding site.

Belongs to the ABC transporter superfamily. Lipid exporter (TC 3.A.1.106) family. Homodimer.

The protein resides in the cell inner membrane. It carries out the reaction ATP + H2O + lipid A-core oligosaccharideSide 1 = ADP + phosphate + lipid A-core oligosaccharideSide 2.. Its function is as follows. Involved in lipopolysaccharide (LPS) biosynthesis. Translocates lipid A-core from the inner to the outer leaflet of the inner membrane. Transmembrane domains (TMD) form a pore in the inner membrane and the ATP-binding domain (NBD) is responsible for energy generation. This is ATP-dependent lipid A-core flippase from Psychrobacter arcticus (strain DSM 17307 / VKM B-2377 / 273-4).